The primary structure comprises 112 residues: Cornifelin homolog (112 aa).

Belongs to the cornifelin family.

This Danio rerio (Zebrafish) protein is Cornifelin homolog (cnfn).